A 188-amino-acid polypeptide reads, in one-letter code: Adenylate kinase (188 aa).

Residue 12–17 (GVGKGT) participates in ATP binding. The interval 32–61 (STGDIFRSAMANHTELGDKAKSFMDAGNLV) is NMP. AMP is bound by residues T33, R38, 59 to 61 (NLV), 89 to 92 (GYPR), and Q96. Residues 130-136 (GRGREDD) form an LID region. Residue R131 coordinates ATP. R133 and R144 together coordinate AMP. G172 provides a ligand contact to ATP.

This sequence belongs to the adenylate kinase family. Monomer.

It localises to the cytoplasm. The enzyme catalyses AMP + ATP = 2 ADP. It participates in purine metabolism; AMP biosynthesis via salvage pathway; AMP from ADP: step 1/1. In terms of biological role, catalyzes the reversible transfer of the terminal phosphate group between ATP and AMP. Plays an important role in cellular energy homeostasis and in adenine nucleotide metabolism. This Oenococcus oeni (strain ATCC BAA-331 / PSU-1) protein is Adenylate kinase.